A 194-amino-acid polypeptide reads, in one-letter code: NADH-quinone oxidoreductase subunit B (194 aa).

Pro residues predominate over residues 1 to 11 (MGVIATPPPSV). Residues 1-24 (MGVIATPPPSVQGPSSQVPSSAPI) are disordered. Positions 12–21 (QGPSSQVPSS) are enriched in low complexity. Residues Cys72, Cys73, Cys137, and Cys167 each contribute to the [4Fe-4S] cluster site.

It belongs to the complex I 20 kDa subunit family. NDH-1 is composed of 14 different subunits. Subunits NuoB, C, D, E, F, and G constitute the peripheral sector of the complex. The cofactor is [4Fe-4S] cluster.

The protein resides in the cell inner membrane. The enzyme catalyses a quinone + NADH + 5 H(+)(in) = a quinol + NAD(+) + 4 H(+)(out). Its function is as follows. NDH-1 shuttles electrons from NADH, via FMN and iron-sulfur (Fe-S) centers, to quinones in the respiratory chain. The immediate electron acceptor for the enzyme in this species is believed to be ubiquinone. Couples the redox reaction to proton translocation (for every two electrons transferred, four hydrogen ions are translocated across the cytoplasmic membrane), and thus conserves the redox energy in a proton gradient. The chain is NADH-quinone oxidoreductase subunit B from Rhodospirillum centenum (strain ATCC 51521 / SW).